The chain runs to 228 residues: tRNA (carboxymethyluridine(34)-5-O)-methyltransferase (228 aa).

The protein resides in the cytoplasm. It localises to the nucleus. It carries out the reaction 5-(carboxymethyl)uridine(34) in tRNA + S-adenosyl-L-methionine = 5-(2-methoxy-2-oxoethyl)uridine(34) in tRNA + S-adenosyl-L-homocysteine. Functionally, required for the methylation of the wobble bases at position 34 in tRNA. Appears to have a role in stress-response. This is tRNA (carboxymethyluridine(34)-5-O)-methyltransferase (trm9) from Schizosaccharomyces pombe (strain 972 / ATCC 24843) (Fission yeast).